The following is a 350-amino-acid chain: Methionine aminopeptidase 1D, chloroplastic/mitochondrial (350 aa).

The transit peptide at 1–49 directs the protein to the chloroplast and mitochondrion; sequence MAGVKSLQPRLISSFLGNNSIRSTQPLIHLFRFDLGRRHVSMQLSRTFS. Glycine 50 bears the N-acetylglycine mark. The segment at 71 to 90 is disordered; the sequence is RLRPGNVSPRRPVPGHITKP. Residue histidine 180 coordinates substrate. Residues aspartate 197, aspartate 208, and histidine 271 each contribute to the a divalent metal cation site. Histidine 278 contributes to the substrate binding site. Positions 303 and 334 each coordinate a divalent metal cation.

The protein belongs to the peptidase M24A family. Methionine aminopeptidase type 1 subfamily. It depends on Co(2+) as a cofactor. Zn(2+) is required as a cofactor. Requires Mn(2+) as cofactor. Fe(2+) serves as cofactor. In terms of tissue distribution, ubiquitous. Preferentially expressed in green tissues.

Its subcellular location is the plastid. The protein resides in the chloroplast. The protein localises to the mitochondrion. The enzyme catalyses Release of N-terminal amino acids, preferentially methionine, from peptides and arylamides.. Its function is as follows. Removes the N-terminal methionine from nascent proteins. The N-terminal methionine is often cleaved when the second residue in the primary sequence is small and uncharged (Met-Ala-, Cys, Gly, Pro, Ser, Thr, or Val). In Arabidopsis thaliana (Mouse-ear cress), this protein is Methionine aminopeptidase 1D, chloroplastic/mitochondrial (MAP1D).